The following is a 323-amino-acid chain: MKDKYGREIDYLRISLTDKCNLRCAYCMEKDHNDFIHNDKLMTLDEILRVVKECASIGIKKVRLTGGEPLVREGIVDLIKNINKIPEIEEICLTTNGILLGDKVKELSENGLKRVNISLDTLKEDRFKEITRIGTLDKVLYSIEKCLENNVKVKINTVILEDFNKDEILDLINLACENPIDLRFIELMPIGEGKKFKGVTNSEILEIIKKEKKVLSDGKTLRLNGPAKYISIEGFKGKIGFISAMSDCFCEDCNRIRVTPEGFMKQCLHWKYGINLRDKMRNGISDEELREIIKKSIYEKPEKHNFKMKEKDEDKRFMYEIGG.

The 230-residue stretch at 4–233 folds into the Radical SAM core domain; sequence KYGREIDYLR…NGPAKYISIE (230 aa). Arg13 is a GTP binding site. Residues Cys20 and Cys24 each coordinate [4Fe-4S] cluster. Tyr26 serves as a coordination point for S-adenosyl-L-methionine. Position 27 (Cys27) interacts with [4Fe-4S] cluster. Arg63 contributes to the GTP binding site. Position 67 (Gly67) interacts with S-adenosyl-L-methionine. Thr94 is a binding site for GTP. An S-adenosyl-L-methionine-binding site is contributed by Ser118. A GTP-binding site is contributed by Lys154. An S-adenosyl-L-methionine-binding site is contributed by Met188. Residues Cys250 and Cys253 each contribute to the [4Fe-4S] cluster site. 255–257 is a GTP binding site; sequence RIR. Cys267 contacts [4Fe-4S] cluster.

It belongs to the radical SAM superfamily. MoaA family. In terms of assembly, monomer and homodimer. The cofactor is [4Fe-4S] cluster.

The enzyme catalyses GTP + AH2 + S-adenosyl-L-methionine = (8S)-3',8-cyclo-7,8-dihydroguanosine 5'-triphosphate + 5'-deoxyadenosine + L-methionine + A + H(+). The protein operates within cofactor biosynthesis; molybdopterin biosynthesis. In terms of biological role, catalyzes the cyclization of GTP to (8S)-3',8-cyclo-7,8-dihydroguanosine 5'-triphosphate. The sequence is that of GTP 3',8-cyclase from Clostridium perfringens (strain 13 / Type A).